The primary structure comprises 324 residues: Adipolin (324 aa).

The N-terminal stretch at 1-24 is a signal peptide; it reads MRCWVWLLVAIVLCQQLSVVRVLA. 2 disordered regions span residues 28–66 and 83–121; these read ERKKGKDPHQFTEPFNVSLSNSEELHETDKLSETPDPGL and GANSKKKCKGKDKKLRGLFGPPGPPGPQGPPGPPGMPGA. Residues 40-49 are compositionally biased toward polar residues; that stretch reads EPFNVSLSNS. Residue N43 is glycosylated (N-linked (GlcNAc...) asparagine). Positions 50 to 60 are enriched in basic and acidic residues; the sequence is EELHETDKLSE. A compositionally biased stretch (basic residues) spans 86-98; it reads SKKKCKGKDKKLR. Positions 103 to 118 are enriched in pro residues; sequence PPGPPGPQGPPGPPGM. The C1q domain maps to 169–324; the sequence is YRRVDEGFHC…SDFMGILMGL (156 aa).

It belongs to the adipolin/erythroferrone family. As to quaternary structure, homomultimer; disulfide-linked.

The protein localises to the secreted. Its function is as follows. Insulin-sensitizing adipocyte-secreted protein (adipokine) that regulates glucose metabolism in liver and adipose tissue. The sequence is that of Adipolin (c1qtnf12) from Xenopus tropicalis (Western clawed frog).